Reading from the N-terminus, the 237-residue chain is Cell division cycle-associated protein 4 (237 aa).

The region spanning 26 to 73 (YSLQRQSLLDMSLVKLQLCHMLVEPNLCRSVLIANTVRQIQEEMSQDG) is the SERTA domain.

As to expression, expressed preferentially in hematopoietic progenitors and mature blood cells. Expressed at low levels in the heart, lung, spleen, and thymus and at a higher level in muscle.

It is found in the nucleus. May participate in the regulation of cell proliferation through the E2F/RB pathway. May be involved in molecular regulation of hematopoietic stem cells and progenitor cell lineage commitment and differentiation. The sequence is that of Cell division cycle-associated protein 4 (Cdca4) from Mus musculus (Mouse).